Reading from the N-terminus, the 82-residue chain is UPF0291 protein LJ_1507 (82 aa).

A disordered region spans residues 61–82; that stretch reads DGKEVTSEKAKEAQRRKGLRKD.

This sequence belongs to the UPF0291 family.

The protein localises to the cytoplasm. The sequence is that of UPF0291 protein LJ_1507 from Lactobacillus johnsonii (strain CNCM I-12250 / La1 / NCC 533).